A 380-amino-acid chain; its full sequence is tRNA-specific 2-thiouridylase MnmA (380 aa).

ATP contacts are provided by residues 25–32 (AMSGGVDS) and Met-51. The Nucleophile role is filled by Cys-119. Cys-119 and Cys-216 are joined by a disulfide. Gly-143 serves as a coordination point for ATP. Positions 166-168 (KDQ) are interaction with tRNA. Residue Cys-216 is the Cysteine persulfide intermediate of the active site. The interaction with tRNA stretch occupies residues 320-321 (RY).

This sequence belongs to the MnmA/TRMU family.

Its subcellular location is the cytoplasm. It catalyses the reaction S-sulfanyl-L-cysteinyl-[protein] + uridine(34) in tRNA + AH2 + ATP = 2-thiouridine(34) in tRNA + L-cysteinyl-[protein] + A + AMP + diphosphate + H(+). Functionally, catalyzes the 2-thiolation of uridine at the wobble position (U34) of tRNA, leading to the formation of s(2)U34. This is tRNA-specific 2-thiouridylase MnmA from Deinococcus radiodurans (strain ATCC 13939 / DSM 20539 / JCM 16871 / CCUG 27074 / LMG 4051 / NBRC 15346 / NCIMB 9279 / VKM B-1422 / R1).